We begin with the raw amino-acid sequence, 396 residues long: Coiled-coil domain-containing protein 1 (396 aa).

An N-terminal signal peptide occupies residues 1 to 21 (MAARSALCFLAIITLFVYACG). Coiled-coil stretches lie at residues 53–73 (KIDS…NDRD), 109–129 (EVEK…DIID), 208–242 (DKES…ILDT), and 287–308 (YEEI…IDEH). The segment covering 231–256 (DANDDVNDILDTDDEDEDEDVQEEKD) has biased composition (acidic residues). Disordered stretches follow at residues 231–260 (DAND…EDIH) and 288–378 (EEIE…VADD).

Component of the acid-insoluble and acid-soluble organic matrix of calcified layers of the shell (at protein level).

Its subcellular location is the secreted. In Lottia gigantea (Giant owl limpet), this protein is Coiled-coil domain-containing protein 1.